The primary structure comprises 303 residues: Polyisoprenyl-teichoic acid--peptidoglycan teichoic acid transferase TagU (303 aa).

The Cytoplasmic segment spans residues 1-6 (MSKGKK). Residues 7–27 (IFAIIFGIILVLFLAVVGMGA) traverse the membrane as a helical; Signal-anchor for type II membrane protein segment. Topologically, residues 28-303 (KLYWDVSKSM…QELKNQLNTK (276 aa)) are extracellular.

It belongs to the LytR/CpsA/Psr (LCP) family.

Its subcellular location is the cell membrane. It participates in cell wall biogenesis. Functionally, may catalyze the final step in cell wall teichoic acid biosynthesis, the transfer of the anionic cell wall polymers (APs) from their lipid-linked precursor to the cell wall peptidoglycan (PG). This Enterococcus faecalis (strain ATCC 700802 / V583) protein is Polyisoprenyl-teichoic acid--peptidoglycan teichoic acid transferase TagU.